The chain runs to 251 residues: Flap endonuclease Xni (251 aa).

Asp104 contributes to the Mg(2+) binding site. Residues 160–249 form the 5'-3' exonuclease domain; the sequence is VQPQQLPDYW…IDGNLQQLRL (90 aa). Residues Leu171, Ala172, Pro180, Val182, and Ile185 each coordinate K(+). The interaction with DNA stretch occupies residues 184-189; that stretch reads GIGPKS.

The protein belongs to the Xni family. It depends on Mg(2+) as a cofactor. K(+) is required as a cofactor.

Its function is as follows. Has flap endonuclease activity. During DNA replication, flap endonucleases cleave the 5'-overhanging flap structure that is generated by displacement synthesis when DNA polymerase encounters the 5'-end of a downstream Okazaki fragment. The protein is Flap endonuclease Xni of Escherichia coli O139:H28 (strain E24377A / ETEC).